The chain runs to 105 residues: Large ribosomal subunit protein uL24 (105 aa).

Residues 67–105 (HISNLNPVDPKTGKATRIGRRKSSEGTLVRYSKKSGEEI) are disordered.

It belongs to the universal ribosomal protein uL24 family. As to quaternary structure, part of the 50S ribosomal subunit.

In terms of biological role, one of two assembly initiator proteins, it binds directly to the 5'-end of the 23S rRNA, where it nucleates assembly of the 50S subunit. One of the proteins that surrounds the polypeptide exit tunnel on the outside of the subunit. The polypeptide is Large ribosomal subunit protein uL24 (Bacteroides thetaiotaomicron (strain ATCC 29148 / DSM 2079 / JCM 5827 / CCUG 10774 / NCTC 10582 / VPI-5482 / E50)).